A 999-amino-acid chain; its full sequence is Sarcoplasmic/endoplasmic reticulum calcium ATPase 3 (999 aa).

N-acetylmethionine is present on Met-1. Over 1–48 (MEEAHLLSAADVLRRFSVTAEGGLSLEQVTDARERYGPNELPTEEGKS) the chain is Cytoplasmic. The residue at position 17 (Ser-17) is a Phosphoserine. Thr-19 bears the Phosphothreonine mark. At Ser-25 the chain carries Phosphoserine. The helical transmembrane segment at 49 to 69 (LWELVVEQFEDLLVRILLLAA) threads the bilayer. The Lumenal portion of the chain corresponds to 70–89 (LVSFVLAWFEEGEETTTAFV). The chain crosses the membrane as a helical span at residues 90-110 (EPLVIMLILVANAIVGVWQER). The Cytoplasmic segment spans residues 111 to 253 (NAESAIEALK…PERTPLQRKL (143 aa)). Residues 254-273 (DEFGRQLSHAISVICVAVWV) form a helical membrane-spanning segment. Over 274–295 (INIGHFADPAHGGSWLRGAVYY) the chain is Lumenal. A helical membrane pass occupies residues 296–313 (FKIAVALAVAAIPEGLPA). Residues Val-304, Ala-305, Ile-307, and Glu-309 each contribute to the Ca(2+) site. Residues 314–757 (VITTCLALGT…EEGRAIYNNM (444 aa)) lie on the Cytoplasmic side of the membrane. Asp-351 functions as the 4-aspartylphosphate intermediate in the catalytic mechanism. Mg(2+)-binding residues include Asp-351 and Thr-353. Thr-353 provides a ligand contact to ATP. The interaction with phospholamban 1 stretch occupies residues 370-400 (AEAEAGTCRLHEFTISGTTYTPEGEVRQGEQ). Thr-415 bears the Phosphothreonine mark. Positions 442, 489, 515, 560, 625, 626, and 627 each coordinate ATP. At Ser-662 the chain carries Phosphoserine. Residues Arg-678 and Lys-684 each contribute to the ATP site. Asp-703 contacts Mg(2+). Asn-706 is a binding site for ATP. The chain crosses the membrane as a helical span at residues 758–777 (KQFIRYLISSNVGEVVCIFL). Asn-768 and Glu-771 together coordinate Ca(2+). Residues 778-787 (TAILGLPEAL) lie on the Lumenal side of the membrane. Residues 788–808 (IPVQLLWVNLVTDGLPATALG) traverse the membrane as a helical segment. Residues 788 to 808 (IPVQLLWVNLVTDGLPATALG) are interaction with phospholamban 2. Asn-796, Thr-799, and Asp-800 together coordinate Ca(2+). At 809–828 (FNPPDLDIMEKPPRNPREAL) the chain is on the cytoplasmic side. Residues 829–851 (ISGWLFFRYLAIGVYVGLATVAA) form a helical membrane-spanning segment. Residues 852 to 897 (ATWWFLYDTEGPQVTFYQLRNFLKCSEDNPLFAGIDCKVFESRFPT) lie on the Lumenal side of the membrane. The chain crosses the membrane as a helical span at residues 898–917 (TMALSVLVTIEMCNALNSVS). Glu-908 lines the Ca(2+) pocket. The Cytoplasmic portion of the chain corresponds to 918–930 (ENQSLLRMPPWLN). The chain crosses the membrane as a helical span at residues 931–949 (PWLLGAVVMSMALHFLILL). Residues 950–964 (VPPLPLIFQVTPLSG) are Lumenal-facing. Residues 965-985 (RQWGVVLQMSLPVILLDEALK) traverse the membrane as a helical segment. Topologically, residues 986 to 999 (YLSRNHMDEKKDLK) are cytoplasmic.

Belongs to the cation transport ATPase (P-type) (TC 3.A.3) family. Type IIA subfamily. Interacts with sarcolipin (SLN). Interacts with phospholamban (PLN). Interacts with myoregulin (MRLN). Interacts with DWORF. Interacts with VMP1. Interacts with TUNAR; the interaction occurs at low levels in low glucose conditions and is increased by high glucose levels. Mg(2+) is required as a cofactor.

It is found in the endoplasmic reticulum membrane. It localises to the sarcoplasmic reticulum membrane. The catalysed reaction is Ca(2+)(in) + ATP + H2O = Ca(2+)(out) + ADP + phosphate + H(+). With respect to regulation, inhibited by sarcolipin (SLN), phospholamban (PLN) and myoregulin (MRLN). Enhanced by DWORF; DWORF increases activity by displacing sarcolipin (SLN), phospholamban (PLN) and myoregulin (MRLN). In terms of biological role, this magnesium-dependent enzyme catalyzes the hydrolysis of ATP coupled with the transport of calcium. Transports calcium ions from the cytosol into the sarcoplasmic/endoplasmic reticulum lumen. Contributes to calcium sequestration involved in muscular excitation/contraction. The sequence is that of Sarcoplasmic/endoplasmic reticulum calcium ATPase 3 (Atp2a3) from Mus musculus (Mouse).